We begin with the raw amino-acid sequence, 129 residues long: Cocaine- and amphetamine-regulated transcript protein (129 aa).

The first 27 residues, 1-27 (MESSRLRLLPLLGAALLLLLPLLGARA), serve as a signal peptide directing secretion. Tyr41 bears the Phosphotyrosine mark. At Ser48 the chain carries Phosphoserine. Intrachain disulfides connect Cys95/Cys113, Cys101/Cys121, and Cys115/Cys128.

It belongs to the CART family.

It is found in the secreted. Satiety factor closely associated with the actions of leptin and neuropeptide y; this anorectic peptide inhibits both normal and starvation-induced feeding and completely blocks the feeding response induced by neuropeptide Y and regulated by leptin in the hypothalamus. The polypeptide is Cocaine- and amphetamine-regulated transcript protein (Cartpt) (Mus musculus (Mouse)).